We begin with the raw amino-acid sequence, 235 residues long: TVP38/TMEM64 family inner membrane protein YdjZ (235 aa).

Residues 1–13 (MMMMQSRKIWYYR) are Periplasmic-facing. Residues 14 to 34 (ITLIILLFAMLLAWALLPGVH) form a helical membrane-spanning segment. The Cytoplasmic segment spans residues 35-64 (EFINRSVAAFAAVDQQGIERFIQSYGALAA). The chain crosses the membrane as a helical span at residues 65-85 (VVSFLLMILQAIAAPLPAFLI). Residues 86–95 (TFANASLFGA) are Periplasmic-facing. Residues 90 to 199 (ASLFGAFWGG…IVYSWAGSML (110 aa)) form a VTT domain region. Residues 96–116 (FWGGLLSWTSSMAGAALCFFI) traverse the membrane as a helical segment. The Cytoplasmic segment spans residues 117–176 (ARVMGREVVEKLTGKTVLDSMDGFFTRYGKHTILVCRLLPFVPFDPISYAAGLTSIRFRS). A helical membrane pass occupies residues 177-197 (FFIATGLGQLPATIVYSWAGS). Residues 198 to 202 (MLTGG) lie on the Periplasmic side of the membrane. Residues 203 to 223 (TFWFVTGLFILFALTVVIFMA) traverse the membrane as a helical segment. Residues 224 to 235 (KKIWLERQKRNA) are Cytoplasmic-facing.

This sequence belongs to the TVP38/TMEM64 family.

It is found in the cell inner membrane. This is TVP38/TMEM64 family inner membrane protein YdjZ (ydjZ) from Escherichia coli (strain K12).